Consider the following 109-residue polypeptide: Parvalbumin alpha (109 aa).

EF-hand domains follow at residues 38–73 and 77–109; these read KSKE…FTPE and LSDK…VSES. 11 residues coordinate Ca(2+): Asp51, Asp53, Ser55, Phe57, Glu59, Glu62, Asp90, Asp92, Asp94, Lys96, and Glu101.

Belongs to the parvalbumin family.

In muscle, parvalbumin is thought to be involved in relaxation after contraction. It binds two calcium ions. The protein is Parvalbumin alpha of Pelophylax lessonae (Pool frog).